A 439-amino-acid chain; its full sequence is GTPase Der (439 aa).

EngA-type G domains follow at residues 2 to 166 and 176 to 351; these read SVVA…PAPA and TRLA…IEFN. Residues 8 to 15, 55 to 59, 118 to 121, 182 to 189, 229 to 233, and 294 to 297 each bind GTP; these read GRPNVGKS, DTGGF, NKVD, DTAGI, and NKWD. Positions 352–436 constitute a KH-like domain; the sequence is RQVPTGVLNR…PIRLKFKDRN (85 aa).

This sequence belongs to the TRAFAC class TrmE-Era-EngA-EngB-Septin-like GTPase superfamily. EngA (Der) GTPase family. In terms of assembly, associates with the 50S ribosomal subunit.

Its function is as follows. GTPase that plays an essential role in the late steps of ribosome biogenesis. The protein is GTPase Der of Syntrophotalea carbinolica (strain DSM 2380 / NBRC 103641 / GraBd1) (Pelobacter carbinolicus).